Consider the following 433-residue polypeptide: 23S rRNA (uracil(1939)-C(5))-methyltransferase RlmD (433 aa).

Positions 10–68 (RTTTRQIITVSVNDLDSFGQGVARHNGKTLFIPGLLPQENAEVTVTEDKKQYARAKVVR) constitute a TRAM domain. The [4Fe-4S] cluster site is built by Cys81, Cys87, Cys90, and Cys162. S-adenosyl-L-methionine is bound by residues Gln265, Phe294, Asn299, Glu315, Asn342, and Asp363. Cys389 functions as the Nucleophile in the catalytic mechanism.

It belongs to the class I-like SAM-binding methyltransferase superfamily. RNA M5U methyltransferase family. RlmD subfamily.

It carries out the reaction uridine(1939) in 23S rRNA + S-adenosyl-L-methionine = 5-methyluridine(1939) in 23S rRNA + S-adenosyl-L-homocysteine + H(+). In terms of biological role, catalyzes the formation of 5-methyl-uridine at position 1939 (m5U1939) in 23S rRNA. The polypeptide is 23S rRNA (uracil(1939)-C(5))-methyltransferase RlmD (Escherichia coli O6:K15:H31 (strain 536 / UPEC)).